We begin with the raw amino-acid sequence, 330 residues long: Succinylglutamate desuccinylase (330 aa).

3 residues coordinate Zn(2+): H53, E56, and H147. E210 is a catalytic residue.

Belongs to the AspA/AstE family. Succinylglutamate desuccinylase subfamily. The cofactor is Zn(2+).

It catalyses the reaction N-succinyl-L-glutamate + H2O = L-glutamate + succinate. It participates in amino-acid degradation; L-arginine degradation via AST pathway; L-glutamate and succinate from L-arginine: step 5/5. Its function is as follows. Transforms N(2)-succinylglutamate into succinate and glutamate. This chain is Succinylglutamate desuccinylase, found in Yersinia pseudotuberculosis serotype O:3 (strain YPIII).